We begin with the raw amino-acid sequence, 724 residues long: Ribosomal RNA large subunit methyltransferase K/L (724 aa).

In terms of domain architecture, THUMP spans 42–153 (DAQRLVLWSR…KGRATLSVDL (112 aa)).

The protein belongs to the methyltransferase superfamily. RlmKL family.

It is found in the cytoplasm. The enzyme catalyses guanosine(2445) in 23S rRNA + S-adenosyl-L-methionine = N(2)-methylguanosine(2445) in 23S rRNA + S-adenosyl-L-homocysteine + H(+). It catalyses the reaction guanosine(2069) in 23S rRNA + S-adenosyl-L-methionine = N(2)-methylguanosine(2069) in 23S rRNA + S-adenosyl-L-homocysteine + H(+). In terms of biological role, specifically methylates the guanine in position 2445 (m2G2445) and the guanine in position 2069 (m7G2069) of 23S rRNA. The protein is Ribosomal RNA large subunit methyltransferase K/L of Xylella fastidiosa (strain M23).